The chain runs to 393 residues: Metal tolerance protein A2 (393 aa).

Residues 1 to 72 (MVTPKLHLDL…EAQERAASMR (72 aa)) lie on the Cytoplasmic side of the membrane. A helical transmembrane segment spans residues 73–93 (KLLIAVLLCAIFIVVEVVGGI). The Vacuolar portion of the chain corresponds to 94-105 (KANSLAILTDAA). The helical transmembrane segment at 106 to 126 (HLLSDVAAFAISLFSLWASGW) threads the bilayer. Over 127–138 (KANPQQSYGFFR) the chain is Cytoplasmic. The helical transmembrane segment at 139-159 (IEILGALVSIQMIWLLAGILV) threads the bilayer. The Vacuolar portion of the chain corresponds to 160-176 (YEAIVRLNNGSGEVEGS). A helical membrane pass occupies residues 177–197 (LMFAVSAVGLLVNIAMAILLG). Residues 198-233 (HDHGHGHGHSHDNGHGHSHDHGHGIAATEHHHDSGH) form a required for zinc-binding region. Topologically, residues 198–257 (HDHGHGHGHSHDNGHGHSHDHGHGIAATEHHHDSGHDESQLSDVLIEQKKQRNVNIQGAY) are cytoplasmic. Residues 202–236 (HGHGHSHDNGHGHSHDHGHGIAATEHHHDSGHDES) are compositionally biased toward basic and acidic residues. The segment at 202–237 (HGHGHSHDNGHGHSHDHGHGIAATEHHHDSGHDESQ) is disordered. A helical membrane pass occupies residues 258-278 (LHVLGDSIQSVGVMIGGAIIW). Residues 279–284 (YKPEWK) are Vacuolar-facing. A helical transmembrane segment spans residues 285 to 305 (ILDLICTLVFSVIVLGTTIGM). Over 306 to 393 (LRNILEVLME…SHVTIQIERQ (88 aa)) the chain is Cytoplasmic.

This sequence belongs to the cation diffusion facilitator (CDF) transporter (TC 2.A.4) family. SLC30A subfamily.

It is found in the membrane. Functionally, involved in sequestration of excess zinc in the cytoplasm into vacuoles to maintain zinc homeostasis. The polypeptide is Metal tolerance protein A2 (MTPA2) (Arabidopsis thaliana (Mouse-ear cress)).